A 983-amino-acid chain; its full sequence is Pro-apoptotic serine protease NMA111 (983 aa).

Residues 1 to 40 are disordered; the sequence is MSVPTKRRLSFDESTNKRFLNGTHSTENNTSNIEVDEDYG. Over residues 22 to 33 the composition is skewed to polar residues; it reads GTHSTENNTSNI. The interval 59 to 260 is serine protease; it reads WQETITKVVN…LPIYRPLRAL (202 aa). Catalysis depends on charge relay system residues His-108, Asp-139, and Ser-222. 2 PDZ domains span residues 287–365 and 867–948; these read RRLG…QRGG and FWSG…MSFD.

This sequence belongs to the peptidase S1C family.

The protein resides in the nucleus. Functionally, nuclear serine protease which mediates apoptosis. This Scheffersomyces stipitis (strain ATCC 58785 / CBS 6054 / NBRC 10063 / NRRL Y-11545) (Yeast) protein is Pro-apoptotic serine protease NMA111 (NMA111).